We begin with the raw amino-acid sequence, 778 residues long: General transcription and DNA repair factor IIH helicase subunit XPD/RAD3 (778 aa).

The Helicase ATP-binding domain occupies 7–285 (DLPVLFPYPK…KVDSQKLQDE (279 aa)). Residue 42–49 (MPSGTGKT) coordinates ATP. Residues C115, C133, C156, and C191 each contribute to the [4Fe-4S] cluster site. Positions 235-238 (DEAH) match the DEAH box motif. Residues 750–765 (SRKDQGGFIENENKEG) are compositionally biased toward basic and acidic residues. Residues 750–778 (SRKDQGGFIENENKEGEQDEDEDEDIEMQ) are disordered. Acidic residues predominate over residues 766–778 (EQDEDEDEDIEMQ).

This sequence belongs to the helicase family. RAD3/XPD subfamily. As to quaternary structure, component of the 7-subunit TFIIH core complex composed of XPB/SSL2, XPD/RAD3, SSL1, TFB1, TFB2, TFB4 and TFB5, which is active in NER. The core complex associates with the 3-subunit CTD-kinase module TFIIK composed of CCL1, KIN28 and TFB3 to form the 10-subunit holoenzyme (holo-TFIIH) active in transcription. An additionnal subunit, TFB6, plays a role in the dissociation of the SSL2 helicase from TFIIH after transcription initiation. The cofactor is [4Fe-4S] cluster. Mg(2+) serves as cofactor.

Its subcellular location is the nucleus. The enzyme catalyses Couples ATP hydrolysis with the unwinding of duplex DNA at the replication fork by translocating in the 5'-3' direction. This creates two antiparallel DNA single strands (ssDNA). The leading ssDNA polymer is the template for DNA polymerase III holoenzyme which synthesizes a continuous strand.. The catalysed reaction is ATP + H2O = ADP + phosphate + H(+). Its function is as follows. ATP-dependent 5'-3' DNA helicase. Component of the general transcription and DNA repair factor IIH (TFIIH) core complex, which is involved in general and transcription-coupled nucleotide excision repair (NER) of damaged DNA and, when complexed to TFIIK, in RNA transcription by RNA polymerase II. In NER, TFIIH acts by opening DNA around the lesion to allow the excision of the damaged oligonucleotide and its replacement by a new DNA fragment. The ATP-dependent helicase activity of XPD/RAD3 is required for DNA opening. In transcription, TFIIH has an essential role in transcription initiation. When the pre-initiation complex (PIC) has been established, TFIIH is required for promoter opening and promoter escape. Phosphorylation of the C-terminal tail (CTD) of the largest subunit of RNA polymerase II by the kinase module TFIIK controls the initiation of transcription. XPD/RAD3 acts by forming a bridge between TFIIK and the core-TFIIH complex. Involved in the maintenance of the fidelity of DNA replication. Has single-stranded DNA-dependent ATPase activity. 5'-3' DNA helicase activity requires ATP (dATP partially substitutes), will unwind over 800 bp dsDNA. Able to unwind an RNA:DNA hybrid. In Saccharomyces cerevisiae (strain ATCC 204508 / S288c) (Baker's yeast), this protein is General transcription and DNA repair factor IIH helicase subunit XPD/RAD3.